A 209-amino-acid polypeptide reads, in one-letter code: Orotate phosphoribosyltransferase (209 aa).

Residues R96, K100, H102, and 122 to 130 (EDLISTGGS) contribute to the 5-phospho-alpha-D-ribose 1-diphosphate site. Residue S126 participates in orotate binding.

Belongs to the purine/pyrimidine phosphoribosyltransferase family. PyrE subfamily. In terms of assembly, homodimer. Requires Mg(2+) as cofactor.

The catalysed reaction is orotidine 5'-phosphate + diphosphate = orotate + 5-phospho-alpha-D-ribose 1-diphosphate. Its pathway is pyrimidine metabolism; UMP biosynthesis via de novo pathway; UMP from orotate: step 1/2. In terms of biological role, catalyzes the transfer of a ribosyl phosphate group from 5-phosphoribose 1-diphosphate to orotate, leading to the formation of orotidine monophosphate (OMP). The chain is Orotate phosphoribosyltransferase from Streptococcus mutans serotype c (strain ATCC 700610 / UA159).